The following is a 168-amino-acid chain: Photosystem I assembly protein Ycf3 (168 aa).

3 TPR repeats span residues 35-68 (AFTY…EIDP), 72-105 (SYIL…NPFL), and 120-153 (GEQA…TPGN).

The protein belongs to the Ycf3 family.

It is found in the plastid. The protein resides in the chloroplast thylakoid membrane. Essential for the assembly of the photosystem I (PSI) complex. May act as a chaperone-like factor to guide the assembly of the PSI subunits. The polypeptide is Photosystem I assembly protein Ycf3 (Ipomoea purpurea (Common morning glory)).